A 223-amino-acid chain; its full sequence is Serine/threonine/tyrosine-interacting protein A (223 aa).

A Tyrosine-protein phosphatase domain is found at Glu-28 to Ala-176.

It belongs to the protein-tyrosine phosphatase family. Non-receptor class subfamily.

Its function is as follows. Catalytically inactive phosphatase. This chain is Serine/threonine/tyrosine-interacting protein A (styx-a), found in Xenopus laevis (African clawed frog).